The primary structure comprises 201 residues: Small ribosomal subunit protein uS4c (201 aa).

A disordered region spans residues 15–43 (LGALPGLTSKRPRPGSDLRNQSRSGKRSQ). Residues 89–150 (MRLDNILFRL…EQRSRALIQN (62 aa)) enclose the S4 RNA-binding domain.

It belongs to the universal ribosomal protein uS4 family. Part of the 30S ribosomal subunit. Contacts protein S5. The interaction surface between S4 and S5 is involved in control of translational fidelity.

The protein localises to the plastid. It localises to the chloroplast. Its function is as follows. One of the primary rRNA binding proteins, it binds directly to 16S rRNA where it nucleates assembly of the body of the 30S subunit. In terms of biological role, with S5 and S12 plays an important role in translational accuracy. In Liriodendron tulipifera (Tuliptree), this protein is Small ribosomal subunit protein uS4c (rps4).